Consider the following 226-residue polypeptide: MTDLSPVLTIDGPSGAGKGTVSRIVAARLGWHYLDSGALYRAVGVAASWADLDVSDPAALVRCTFDTKVEFDEAGEAGLRVLVNGVDATGELRLETTGALASAIAAIPEVRSALKERQRAFRQPPGLVADGRDMGTVIFPDAAFKVFLTASAEERAGRRHKQLMEKGVSVIFDDLLREIMARDARDAQRVVAPLRPAEDAVLIDTSGIGIEDVVQRVVGLLDSRTP.

12-20 (GPSGAGKGT) serves as a coordination point for ATP.

It belongs to the cytidylate kinase family. Type 1 subfamily.

The protein localises to the cytoplasm. It catalyses the reaction CMP + ATP = CDP + ADP. The enzyme catalyses dCMP + ATP = dCDP + ADP. This chain is Cytidylate kinase, found in Xanthomonas campestris pv. campestris (strain B100).